The sequence spans 370 residues: Phosphoserine aminotransferase (370 aa).

M1 carries the post-translational modification N-acetylmethionine. Residues H44 and R45 each contribute to the O-phospho-L-serine site. K51 bears the N6-acetyllysine mark. Residues G79, C80, and W107 each contribute to the pyridoxal 5'-phosphate site. The residue at position 127 (K127) is an N6-acetyllysine. Residues T156, D176, and Q199 each contribute to the pyridoxal 5'-phosphate site. K200 is modified (N6-(pyridoxal phosphate)lysine). Pyridoxal 5'-phosphate contacts are provided by N241 and T242. An N6-acetyllysine mark is found at K269, K318, and K323. Residue S331 is modified to Phosphoserine. An N6-acetyllysine modification is found at K333. H335, R336, and R342 together coordinate O-phospho-L-serine.

Belongs to the class-V pyridoxal-phosphate-dependent aminotransferase family. SerC subfamily. Homodimer. Pyridoxal 5'-phosphate serves as cofactor. As to expression, expressed at high levels in the brain, liver, kidney and pancreas, and very weakly expressed in the thymus, prostate, testis and colon.

It carries out the reaction O-phospho-L-serine + 2-oxoglutarate = 3-phosphooxypyruvate + L-glutamate. It functions in the pathway amino-acid biosynthesis; L-serine biosynthesis; L-serine from 3-phospho-D-glycerate: step 2/3. Phosphoserine transaminase activity is strongly stimulated by increasing the ionic strength. Functionally, involved in L-serine biosynthesis via the phosphorylated pathway, a three-step pathway converting the glycolytic intermediate 3-phospho-D-glycerate into L-serine. Catalyzes the second step, that is the pyridoxal 5'-phosphate-dependent transamination of 3-phosphohydroxypyruvate and L-glutamate to O-phosphoserine (OPS) and alpha-ketoglutarate. The polypeptide is Phosphoserine aminotransferase (Homo sapiens (Human)).